The chain runs to 208 residues: V-type ATP synthase subunit D (208 aa).

The protein belongs to the V-ATPase D subunit family.

Its function is as follows. Produces ATP from ADP in the presence of a proton gradient across the membrane. In Streptococcus pyogenes serotype M1, this protein is V-type ATP synthase subunit D.